The following is a 371-amino-acid chain: 4-hydroxy-3-methylbut-2-en-1-yl diphosphate synthase (flavodoxin) (371 aa).

Residues cysteine 272, cysteine 275, cysteine 307, and glutamate 314 each coordinate [4Fe-4S] cluster.

This sequence belongs to the IspG family. [4Fe-4S] cluster serves as cofactor.

It catalyses the reaction (2E)-4-hydroxy-3-methylbut-2-enyl diphosphate + oxidized [flavodoxin] + H2O + 2 H(+) = 2-C-methyl-D-erythritol 2,4-cyclic diphosphate + reduced [flavodoxin]. It participates in isoprenoid biosynthesis; isopentenyl diphosphate biosynthesis via DXP pathway; isopentenyl diphosphate from 1-deoxy-D-xylulose 5-phosphate: step 5/6. Converts 2C-methyl-D-erythritol 2,4-cyclodiphosphate (ME-2,4cPP) into 1-hydroxy-2-methyl-2-(E)-butenyl 4-diphosphate. This is 4-hydroxy-3-methylbut-2-en-1-yl diphosphate synthase (flavodoxin) from Magnetococcus marinus (strain ATCC BAA-1437 / JCM 17883 / MC-1).